The chain runs to 289 residues: CCR4-associated factor 16 (289 aa).

The 243-residue stretch at 7 to 249 (IEVRNLTYKF…SEVVNAKVNG (243 aa)) folds into the ABC transporter domain. Residue 41–48 (GANGAGKS) participates in ATP binding.

Belongs to the ABC transporter superfamily. Interacts with CCR4 and SSN2.

It localises to the cytoplasm. The protein resides in the nucleus. The polypeptide is CCR4-associated factor 16 (CAF16) (Saccharomyces cerevisiae (strain ATCC 204508 / S288c) (Baker's yeast)).